The sequence spans 436 residues: MATKQSVTTREGDRIAIVAGLRTPFAKMATYFHGVPAVDLGKMVVNELLVRHGVQKEWVDQVVYGQVVQMPEAPNIAREIVLGTGMNVHTDAYSVSRACATSFQSTVNIAESMMAGTVQVGIAGGADSTSVSPIGVSKNLARALVDLQKTKTLGQKLNIFKRLSLRDLAPVPPAVAEYSTGLSMGQTAEQMAKTHQISREEQDKLAHRSHSLAAESWEAGKLSSEVMTAYAEPYKAALERDNNVRFDSKLEGYAKLRPVFDKKYGSVTAANATPLTDGASAVLMMTESRAKELGYTPLGYIKSYAFAAIDVWEDMLMGPSYATPIALDRAGMTLNDLTLIEMHEAFAAQTLANVKMFASDKFAKEKLGRDKATGEIDMDKFNVMGSSIAYGHPFAATGTRMITQMLNELNRRGGGSGLLTACAAGGLGAAMIVETE.

Cys-99 acts as the Acyl-thioester intermediate in catalysis. Catalysis depends on proton acceptor residues His-392 and Cys-422.

Belongs to the thiolase-like superfamily. Thiolase family. Heterotetramer of two alpha chains (FadJ) and two beta chains (FadI).

It is found in the cytoplasm. The catalysed reaction is an acyl-CoA + acetyl-CoA = a 3-oxoacyl-CoA + CoA. Its pathway is lipid metabolism; fatty acid beta-oxidation. Its function is as follows. Catalyzes the final step of fatty acid oxidation in which acetyl-CoA is released and the CoA ester of a fatty acid two carbons shorter is formed. The polypeptide is 3-ketoacyl-CoA thiolase (Alteromonas mediterranea (strain DSM 17117 / CIP 110805 / LMG 28347 / Deep ecotype)).